A 152-amino-acid chain; its full sequence is Succinate dehydrogenase [ubiquinone] cytochrome b small subunit A, mitochondrial (152 aa).

The transit peptide at 1–21 (MVTVLRLSSLCRANRASAFKS) directs the protein to the mitochondrion. Residues 22–56 (LLIRPVPCLSQDLHTVQTSQIHTSQNHHAASKAAS) lie on the Mitochondrial matrix side of the membrane. The helical transmembrane segment at 57–78 (LHWTSERALSVALLGLLPAAYL) threads the bilayer. The Mitochondrial intermembrane segment spans residues 79–83 (YPGAA). The helical transmembrane segment at 84 to 104 (VDYSLAAALTLHGHWGLGQVV) threads the bilayer. Histidine 95 contributes to the heme b binding site. At 105–113 (TDYVHGDAK) the chain is on the mitochondrial matrix side. Residue tyrosine 107 coordinates a ubiquinone. A helical transmembrane segment spans residues 114–135 (IKLANTSLFALSALTFAGLCYF). The Mitochondrial intermembrane portion of the chain corresponds to 136 to 152 (NYHDVGICKAVAMLWSL).

This sequence belongs to the CybS family. As to quaternary structure, component of complex II composed of four subunits: the flavoprotein (FP) SDHA, iron-sulfur protein (IP) SDHB, and a cytochrome b560 composed of SDHC and SDHD.

It localises to the mitochondrion inner membrane. The protein operates within carbohydrate metabolism; tricarboxylic acid cycle. Its function is as follows. Membrane-anchoring subunit of succinate dehydrogenase (SDH) that is involved in complex II of the mitochondrial electron transport chain and is responsible for transferring electrons from succinate to ubiquinone (coenzyme Q). SDH also oxidizes malate to the non-canonical enol form of oxaloacetate, enol-oxaloacetate. Enol-oxaloacetate, which is a potent inhibitor of the succinate dehydrogenase activity, is further isomerized into keto-oxaloacetate. In Xenopus laevis (African clawed frog), this protein is Succinate dehydrogenase [ubiquinone] cytochrome b small subunit A, mitochondrial (sdhd-a).